A 470-amino-acid polypeptide reads, in one-letter code: 1-aminocyclopropane-1-carboxylate synthase 5 (470 aa).

Positions 47 and 85 each coordinate substrate. Lys272 bears the N6-(pyridoxal phosphate)lysine mark. Ser461 bears the Phosphoserine mark.

The protein belongs to the class-I pyridoxal-phosphate-dependent aminotransferase family. In terms of assembly, homodimer and heterodimer. In vivo, the relevance of heterodimerization with other ACS enzymes is however unsure. Interacts (via its C-terminal region) with FEI1, FEI2, ETO1, EOL1 and EOL2. Interacts with GRF3. Requires pyridoxal 5'-phosphate as cofactor. In terms of processing, may be processed at its C-terminus. Ubiquitinated. The interaction with ETO1 (and possibly EOL1 and EOL2) mediate its proteasome-dependent degradation. Its stability and degradation plays a central role in ethylene biosynthesis. In terms of tissue distribution, expressed in roots and siliques.

The catalysed reaction is S-adenosyl-L-methionine = 1-aminocyclopropane-1-carboxylate + S-methyl-5'-thioadenosine + H(+). The protein operates within alkene biosynthesis; ethylene biosynthesis via S-adenosyl-L-methionine; ethylene from S-adenosyl-L-methionine: step 1/2. 1-aminocyclopropane-1-carboxylate synthase (ACS) enzymes catalyze the conversion of S-adenosyl-L-methionine (SAM) into 1-aminocyclopropane-1-carboxylate (ACC), a direct precursor of ethylene. The chain is 1-aminocyclopropane-1-carboxylate synthase 5 (ACS5) from Arabidopsis thaliana (Mouse-ear cress).